We begin with the raw amino-acid sequence, 111 residues long: Dynein light chain Tctex-type (111 aa).

It belongs to the dynein light chain Tctex-type family.

It is found in the cytoplasm. Its subcellular location is the cytoskeleton. Functionally, acts as a non-catalytic accessory component of a dynein complex. The polypeptide is Dynein light chain Tctex-type (dlcA) (Dictyostelium discoideum (Social amoeba)).